Here is a 76-residue protein sequence, read N- to C-terminus: Conotoxin Cal29b (76 aa).

The first 43 residues, Met1–Arg43, serve as a signal peptide directing secretion.

It belongs to the conotoxin O1 superfamily. Post-translationally, may contain 4 disulfide bonds. Expressed by the venom duct.

The protein localises to the secreted. Its function is as follows. Is able to inhibit the growth of Mycobacterium tuberculosis (MIC=0.22-3.52 uM against strain H37Rv and 2 multidrug-resistant strains). May also show neurotoxic activity. The chain is Conotoxin Cal29b from Californiconus californicus (California cone).